The following is a 188-amino-acid chain: 3-deoxy-D-manno-octulosonate 8-phosphate phosphatase KdsC (188 aa).

2 residues coordinate Mg(2+): D32 and D34. Substrate-binding positions include D34, 55–59, R63, R78, R86, and K102; that span reads NVRDG. D125 is a binding site for Mg(2+).

The protein belongs to the KdsC family. As to quaternary structure, homotetramer. Requires Mg(2+) as cofactor.

The catalysed reaction is 3-deoxy-alpha-D-manno-2-octulosonate-8-phosphate + H2O = 3-deoxy-alpha-D-manno-oct-2-ulosonate + phosphate. The protein operates within carbohydrate biosynthesis; 3-deoxy-D-manno-octulosonate biosynthesis; 3-deoxy-D-manno-octulosonate from D-ribulose 5-phosphate: step 3/3. It participates in bacterial outer membrane biogenesis; lipopolysaccharide biosynthesis. Catalyzes the hydrolysis of 3-deoxy-D-manno-octulosonate 8-phosphate (KDO 8-P) to 3-deoxy-D-manno-octulosonate (KDO) and inorganic phosphate. The protein is 3-deoxy-D-manno-octulosonate 8-phosphate phosphatase KdsC of Escherichia coli (strain K12).